We begin with the raw amino-acid sequence, 153 residues long: Myosin regulatory light chain (153 aa).

A1 bears the Blocked amino end (Ala) mark. EF-hand domains follow at residues 15–50 (KQIQ…LGRT) and 81–116 (DSEE…MGNN). Residues D28, D30, D32, and D39 each coordinate Ca(2+).

In terms of biological role, in molluscan muscle, calcium regulation is associated with myosin rather than with actin. Muscle myosin contains two types of light chains: the catalytic light chain, essential for ATPase activity, and the regulatory light chain, a calcium-binding protein responsible for Ca(2+) dependent binding and Ca(2+) dependent Mg-ATPase activity. The chain is Myosin regulatory light chain from Patinopecten sp. (Scallop).